The primary structure comprises 488 residues: Retinoic acid receptor RXR-alpha (488 aa).

Residues 1-160 form a modulating region; sequence MSSAAMDTKH…GAMASFTKHI (160 aa). A Glycyl lysine isopeptide (Lys-Gly) (interchain with G-Cter in SUMO) cross-link involves residue Lys-134. The segment at residues 158-233 is a DNA-binding region (nuclear receptor); it reads KHICAICGDR…MGMKREAVQE (76 aa). Positions 161, 164, 178, and 181 each coordinate Zn(2+). The segment at 161 to 181 adopts an NR C4-type zinc-finger fold; that stretch reads CAICGDRSSGKHYGVYSCEGC. Residues 186–191 are nuclear localization signal; it reads KRTVRK. Residues Cys-197, Cys-203, Cys-213, and Cys-216 each contribute to the Zn(2+) site. An NR C4-type zinc finger spans residues 197 to 216; the sequence is CRDSKDCMIDKRQRNRCQYC. Residues 227-250 form a hinge region; sequence KREAVQEERQRGKERNENEVESSN. A compositionally biased stretch (basic and acidic residues) spans 232 to 244; that stretch reads QEERQRGKERNEN. The interval 232–256 is disordered; it reads QEERQRGKERNENEVESSNSANEDM. Residues 253 to 484 enclose the NR LBD domain; sequence NEDMPVEKIL…TFLMEMLEAP (232 aa). Positions 342 and 353 each coordinate 9-cis-retinoate. All-trans-retinoate is bound by residues Arg-342 and Ala-353. The segment at 374 to 394 is required for nuclear export; sequence RVLTELVSKMRDMQMDKTELG. Positions 473–484 are AF-2; that stretch reads IDTFLMEMLEAP.

The protein belongs to the nuclear hormone receptor family. NR2 subfamily. In terms of assembly, homodimer. Heterodimer; with a rar molecule. Binds DNA preferentially as a rar/rxr heterodimer. Interacts with coactivator ncoa3 and with senp6. In terms of processing, sumoylated on Lys-134; which negatively regulates transcriptional activity. Desumoylated specifically by SENP6.

Its subcellular location is the nucleus. Functionally, receptor for retinoic acid that acts as a transcription factor. Forms homo- or heterodimers with retinoic acid receptors (rars) and binds to target response elements in response to their ligands, all-trans or 9-cis retinoic acid, to regulate gene expression in various biological processes. The rar/rxr heterodimers bind to the retinoic acid response elements (RARE) composed of tandem 5'-AGGTCA-3' sites known as DR1-DR5 to regulate transcription. The high affinity ligand for rxrs is 9-cis retinoic acid. In the absence of ligand, the rar/rxr heterodimers associate with a multiprotein complex containing transcription corepressors that induce histone deacetylation, chromatin condensation and transcriptional suppression. On ligand binding, the corepressors dissociate from the receptors and coactivators are recruited leading to transcriptional activation. The chain is Retinoic acid receptor RXR-alpha (rxra) from Xenopus laevis (African clawed frog).